Here is a 171-residue protein sequence, read N- to C-terminus: Lipoprotein signal peptidase (171 aa).

4 consecutive transmembrane segments (helical) span residues 12–32 (LAWLWLSLLVLVIDQATKLYF), 42–62 (IVVIPDYFSWTLAYNTGAAFS), 70–90 (WQRWLFALIAVVVSAVLVVWL), and 96–116 (NETWLAVALALVLGGAIGNLY). Active-site residues include Asp-126 and Asp-145. A helical transmembrane segment spans residues 137–157 (YFPAFNVADSAITVGAVMLAL).

Belongs to the peptidase A8 family.

It localises to the cell inner membrane. The enzyme catalyses Release of signal peptides from bacterial membrane prolipoproteins. Hydrolyzes -Xaa-Yaa-Zaa-|-(S,diacylglyceryl)Cys-, in which Xaa is hydrophobic (preferably Leu), and Yaa (Ala or Ser) and Zaa (Gly or Ala) have small, neutral side chains.. The protein operates within protein modification; lipoprotein biosynthesis (signal peptide cleavage). Functionally, this protein specifically catalyzes the removal of signal peptides from prolipoproteins. The sequence is that of Lipoprotein signal peptidase from Pseudomonas putida (strain ATCC 47054 / DSM 6125 / CFBP 8728 / NCIMB 11950 / KT2440).